The sequence spans 763 residues: Elongation factor G, mitochondrial (763 aa).

A mitochondrion-targeting transit peptide spans 1–52; it reads MFMRLKVLEMNSIRRQTLLRQFTNVYNVVSRSARLCSQAIPKRLFYSTGSRA. The tr-type G domain occupies 60 to 347; that stretch reads SRLRNIGISA…AVCDYLPNPS (288 aa). Residues 69–76, 145–149, and 199–202 contribute to the GTP site; these read AHIDSGKT, DTPGH, and NKMD.

Belongs to the TRAFAC class translation factor GTPase superfamily. Classic translation factor GTPase family. EF-G/EF-2 subfamily.

The protein localises to the mitochondrion. The protein operates within protein biosynthesis; polypeptide chain elongation. Its function is as follows. Mitochondrial GTPase that catalyzes the GTP-dependent ribosomal translocation step during translation elongation. During this step, the ribosome changes from the pre-translocational (PRE) to the post-translocational (POST) state as the newly formed A-site-bound peptidyl-tRNA and P-site-bound deacylated tRNA move to the P and E sites, respectively. Catalyzes the coordinated movement of the two tRNA molecules, the mRNA and conformational changes in the ribosome. The sequence is that of Elongation factor G, mitochondrial (mef1) from Schizosaccharomyces japonicus (strain yFS275 / FY16936) (Fission yeast).